The following is a 266-amino-acid chain: MPPRGPASELLLLRLLLLGAATAAPLAPRPSKEELTRCLAEVVTEVLTVGQVQRGPCTALLHKELCGTEPHGCASTEEKGLLLGDFKKQEAGKMRSSQEVRDEEEEEVAERTHKSEVQEQAIRMQGHRQLHQEEDEEEEKEERKRGPMETFEDLWQRHLENGGDLQKRVAEKASDKETAQFQAEEKGVRVLGGDRSLWQGAERGGGERREDLPHHHHHHHQPEAEPRQEKEEASEREEKEVEQLEHLRDELKKVTETLGEQLRREG.

The first 23 residues, 1–23 (MPPRGPASELLLLRLLLLGAATA), serve as a signal peptide directing secretion. Basic and acidic residues-rich tracts occupy residues 90 to 100 (EAGKMRSSQEV), 154 to 188 (LWQRHLENGGDLQKRVAEKASDKETAQFQAEEKGV), 204 to 213 (GGGERREDLP), and 221 to 266 (QPEA…RREG). A disordered region spans residues 90–266 (EAGKMRSSQE…TLGEQLRREG (177 aa)).

As to expression, expressed at higher levels in fetal brain and skeletal muscle. Lower expression is detected in fetal kidney, liver, spleen, thymus, heart and lung.

Its subcellular location is the secreted. The protein is Coiled-coil domain-containing glutamate-rich protein 2 (CCER2) of Homo sapiens (Human).